We begin with the raw amino-acid sequence, 238 residues long: ATP synthase subunit a (238 aa).

Helical transmembrane passes span 18-38 (LTLLAVCIVTIAVIFAFVFWA), 76-96 (YSLLLFTIFLFVAVANNLGLF), 114-134 (NLAFDLALSLFITLMVHIEGV), 166-186 (SLAIRLFGNIFAGEVVTGLIV), and 193-213 (VYWWPIAFLVNMAWTAFSVFI).

This sequence belongs to the ATPase A chain family. In terms of assembly, F-type ATPases have 2 components, CF(1) - the catalytic core - and CF(0) - the membrane proton channel. CF(1) has five subunits: alpha(3), beta(3), gamma(1), delta(1), epsilon(1). CF(0) has three main subunits: a(1), b(2) and c(9-12). The alpha and beta chains form an alternating ring which encloses part of the gamma chain. CF(1) is attached to CF(0) by a central stalk formed by the gamma and epsilon chains, while a peripheral stalk is formed by the delta and b chains.

The protein resides in the cell membrane. Key component of the proton channel; it plays a direct role in the translocation of protons across the membrane. This Streptococcus pyogenes serotype M49 (strain NZ131) protein is ATP synthase subunit a.